Here is a 515-residue protein sequence, read N- to C-terminus: Bifunctional purine biosynthesis protein PurH (515 aa).

Residues 1–145 (MTKRALISVS…KNHASVTVVV (145 aa)) form the MGS-like domain.

It belongs to the PurH family.

The catalysed reaction is (6R)-10-formyltetrahydrofolate + 5-amino-1-(5-phospho-beta-D-ribosyl)imidazole-4-carboxamide = 5-formamido-1-(5-phospho-D-ribosyl)imidazole-4-carboxamide + (6S)-5,6,7,8-tetrahydrofolate. The enzyme catalyses IMP + H2O = 5-formamido-1-(5-phospho-D-ribosyl)imidazole-4-carboxamide. It functions in the pathway purine metabolism; IMP biosynthesis via de novo pathway; 5-formamido-1-(5-phospho-D-ribosyl)imidazole-4-carboxamide from 5-amino-1-(5-phospho-D-ribosyl)imidazole-4-carboxamide (10-formyl THF route): step 1/1. It participates in purine metabolism; IMP biosynthesis via de novo pathway; IMP from 5-formamido-1-(5-phospho-D-ribosyl)imidazole-4-carboxamide: step 1/1. The polypeptide is Bifunctional purine biosynthesis protein PurH (Streptococcus suis).